Reading from the N-terminus, the 182-residue chain is Ribosome-recycling factor (182 aa).

It belongs to the RRF family.

The protein resides in the cytoplasm. Functionally, responsible for the release of ribosomes from messenger RNA at the termination of protein biosynthesis. May increase the efficiency of translation by recycling ribosomes from one round of translation to another. The sequence is that of Ribosome-recycling factor from Prochlorococcus marinus (strain MIT 9515).